We begin with the raw amino-acid sequence, 78 residues long: uncharacterized protein (78 aa).

This is an uncharacterized protein from Saccharomyces cerevisiae (strain ATCC 204508 / S288c) (Baker's yeast).